We begin with the raw amino-acid sequence, 159 residues long: MITKAIYPGTFDPITNGHLDLVTRASAMFSHVILAIADSSSKKPMFTLDERVALAKKVTALLKNVEVLGFSELMAEFAKKHNANILVRGLRSVSDFEYEWQLANMNRHLMPKLESVFLMPSEKWSFISSSLVKEVARHGGDITPFLPKPVTKALLAKLA.

Thr-10 provides a ligand contact to substrate. ATP contacts are provided by residues 10-11 and His-18; that span reads TF. Residues Lys-42, Met-74, and Arg-88 each contribute to the substrate site. Residues 89-91, Glu-99, and 124-130 contribute to the ATP site; these read GLR and WSFISSS.

Belongs to the bacterial CoaD family. In terms of assembly, homohexamer. Requires Mg(2+) as cofactor.

The protein localises to the cytoplasm. The enzyme catalyses (R)-4'-phosphopantetheine + ATP + H(+) = 3'-dephospho-CoA + diphosphate. Its pathway is cofactor biosynthesis; coenzyme A biosynthesis; CoA from (R)-pantothenate: step 4/5. Its function is as follows. Reversibly transfers an adenylyl group from ATP to 4'-phosphopantetheine, yielding dephospho-CoA (dPCoA) and pyrophosphate. The polypeptide is Phosphopantetheine adenylyltransferase (Yersinia pseudotuberculosis serotype I (strain IP32953)).